A 474-amino-acid polypeptide reads, in one-letter code: Glutamate--tRNA ligase 1 (474 aa).

The 'HIGH' region signature appears at 11–21; sequence PSPTGFLHIGG. The span at 113 to 133 shows a compositional bias: basic and acidic residues; that stretch reads TARAEGRAPRYDGRWRDRDPS. A disordered region spans residues 113–136; sequence TARAEGRAPRYDGRWRDRDPSEAP. The 'KMSKS' region signature appears at 240 to 244; it reads KLSKR. Lysine 243 serves as a coordination point for ATP.

This sequence belongs to the class-I aminoacyl-tRNA synthetase family. Glutamate--tRNA ligase type 1 subfamily. As to quaternary structure, monomer.

Its subcellular location is the cytoplasm. It carries out the reaction tRNA(Glu) + L-glutamate + ATP = L-glutamyl-tRNA(Glu) + AMP + diphosphate. Catalyzes the attachment of glutamate to tRNA(Glu) in a two-step reaction: glutamate is first activated by ATP to form Glu-AMP and then transferred to the acceptor end of tRNA(Glu). The polypeptide is Glutamate--tRNA ligase 1 (Methylorubrum extorquens (strain PA1) (Methylobacterium extorquens)).